Reading from the N-terminus, the 523-residue chain is MLRVFVLLIFNVNAYCMYLNWTSHDRPNIVMIMSDAFDGRLTFQPGNKVVQLPYINYMRELGSVFLNSYTNSPICCPSRAAMWSGQFVHLTQSWNNNKCLHPNATTWMDDLRKSGYHTHSMGKLDYTSGHHSVSNRVEAWTRDVPFLLRQEGRPVTDLVGDASTKRVMIKDWTITDAAVQWIRNTTASLTQPFALYLGLNLPHPYRTDSLGPTAGGSTFRTSPYWLNKVSYNQVSVPKWLRFKDMHPVDYYSTVTKNCSGHFTEEEIRNIRAFYYAMCAETDGMLGEVMAALRDTGSLNKTVVLFTSDHGDLAMEHRQFYKMSMFEGSSHVPLLIMGPGVKSGFEVSLPVSLVDIYPTVLDLAGVPQTGGLSGHSLIPLISRVSIHSAEPHPAWAFSEYHGCNANTSTYMLRIAEWKYIAYADGLNVPPQLFNLSKDESELRNIASQFPDVCQDLDKLLRSIVDYPSVSKSVHRYNKQQFLEWKQSLGDSYSQVIASLRWHVDWKKDAKSYERDIDEWLLGLD.

The signal sequence occupies residues 1–16 (MLRVFVLLIFNVNAYC). The Ca(2+) site is built by aspartate 35 and cysteine 75. Residue cysteine 75 is the Nucleophile of the active site. Cysteine 75 is modified (3-oxoalanine (Cys)). The N-linked (GlcNAc...) asparagine glycan is linked to asparagine 103. Lysine 123 and histidine 246 together coordinate substrate. Residue asparagine 257 is glycosylated (N-linked (GlcNAc...) asparagine). Residues aspartate 308 and histidine 309 each coordinate Ca(2+). Asparagine 405 carries an N-linked (GlcNAc...) asparagine glycan.

It belongs to the sulfatase family. Requires Ca(2+) as cofactor. The conversion to 3-oxoalanine (also known as C-formylglycine, FGly), of a serine or cysteine residue in prokaryotes and of a cysteine residue in eukaryotes, is critical for catalytic activity.

Its subcellular location is the secreted. The protein resides in the lysosome. It carries out the reaction an aryl sulfate + H2O = a phenol + sulfate + H(+). It catalyses the reaction Hydrolysis of the 2-sulfate groups of the 2-O-sulfo-D-glucuronate residues of chondroitin sulfate, heparin and heparitin sulfate.. Its function is as follows. Catalyzes the hydrolysis of pseudosubstrates such as p-nitrocatechol sulfate and p-nitrophenyl sulfate. Catalyzes the hydrolysis of the 2-sulfate groups of the 2-O-sulfo-D-glucuronate residues of chondroitin sulfate, heparin and heparitin sulfate. Acts selectively on 2-sulfoglucuronate and lacks activity against 2-sulfoiduronate. The sequence is that of Arylsulfatase K (arsk) from Danio rerio (Zebrafish).